A 61-amino-acid polypeptide reads, in one-letter code: Large ribosomal subunit protein bL32 (61 aa).

It belongs to the bacterial ribosomal protein bL32 family.

This is Large ribosomal subunit protein bL32 from Ehrlichia chaffeensis (strain ATCC CRL-10679 / Arkansas).